Reading from the N-terminus, the 496-residue chain is Membrane-bound lytic murein transglycosylase F (496 aa).

A signal peptide spans 1–29 (MFFRPDFRPRCAKWLIATGLFLMLGACVE). The segment at 30-267 (KPTTLERVKE…RLKDRYYGHV (238 aa)) is non-LT domain. Residues 268-496 (DVLGYVGAYT…SGSSPDKPAL (229 aa)) are LT domain. E314 is an active-site residue. The interval 464-496 (VADGNLHVPGVDKTQPPAPPAPASGSSPDKPAL) is disordered. Over residues 486–496 (ASGSSPDKPAL) the composition is skewed to low complexity.

The protein in the N-terminal section; belongs to the bacterial solute-binding protein 3 family. It in the C-terminal section; belongs to the transglycosylase Slt family.

It is found in the cell outer membrane. It carries out the reaction Exolytic cleavage of the (1-&gt;4)-beta-glycosidic linkage between N-acetylmuramic acid (MurNAc) and N-acetylglucosamine (GlcNAc) residues in peptidoglycan, from either the reducing or the non-reducing ends of the peptidoglycan chains, with concomitant formation of a 1,6-anhydrobond in the MurNAc residue.. Murein-degrading enzyme that degrades murein glycan strands and insoluble, high-molecular weight murein sacculi, with the concomitant formation of a 1,6-anhydromuramoyl product. Lytic transglycosylases (LTs) play an integral role in the metabolism of the peptidoglycan (PG) sacculus. Their lytic action creates space within the PG sacculus to allow for its expansion as well as for the insertion of various structures such as secretion systems and flagella. The polypeptide is Membrane-bound lytic murein transglycosylase F (Pseudomonas savastanoi pv. phaseolicola (strain 1448A / Race 6) (Pseudomonas syringae pv. phaseolicola (strain 1448A / Race 6))).